The following is a 218-amino-acid chain: Response regulator UvrY (218 aa).

Positions 3–119 constitute a Response regulatory domain; that stretch reads NVLLVDDHEL…EVVSAIRSVY (117 aa). Aspartate 54 carries the 4-aspartylphosphate modification. Residues 143–208 enclose the HTH luxR-type domain; the sequence is TESPFASLSE…ELTHLAIRHG (66 aa). Residues 167-186 constitute a DNA-binding region (H-T-H motif); that stretch reads VNEISEQLNLSPKTVNSYRY.

Post-translationally, phosphorylated and activated by BarA.

The protein localises to the cytoplasm. Member of the two-component regulatory system UvrY/BarA involved in the regulation of carbon metabolism via the CsrA/CsrB regulatory system. UvrY activates the transcription of the untranslated csrB RNA and of barA, in an autoregulatory loop. Mediates the effects of CsrA on csrB RNA by BarA-dependent and BarA-independent mechanisms. The protein is Response regulator UvrY (uvrY) of Escherichia coli O157:H7.